The following is a 627-amino-acid chain: MKFSWRTALLWSLPLLVVGFFFWQGSFGGADANLGSNTANTRMTYGRFLEYVDAGRITSVDLYENGRTAIVQVSDPEVDRTLRSRVDLPTNAPELIARLRDSNIRLDSHPVRNNGMVWGFVGNLIFPVLLIASLFFLFRRSSNMPGGPGQAMNFGKSKARFQMDAKTGVMFDDVAGIDEAKEELQEVVTFLKQPERFTAVGAKIPKGVLLVGPPGTGKTLLAKAIAGEAGVPFFSISGSEFVEMFVGVGASRVRDLFKKAKENAPCLIFIDEIDAVGRQRGAGIGGGNDEREQTLNQLLTEMDGFEGNTGIIIIAATNRPDVLDSALMRPGRFDRQVMVDAPDYSGRKEILEVHARNKKLAPEVSIDSIARRTPGFSGADLANLLNEAAILTARRRKSAITLLEIDDAVDRVVAGMEGTPLVDSKSKRLIAYHEVGHAIVGTLLKDHDPVQKVTLIPRGQAQGLTWFTPNEEQGLTTKAQLMARIAGAMGGRAAEEEVFGDDEVTTGAGGDLQQVTEMARQMVTRFGMSNLGPISLESSGGEVFLGGGLMNRSEYSEEVATRIDAQVRQLAEQGHQMARKIVQEQREVVDRLVDLLIEKETIDGEEFRQIVAEYAEVPVKEQLIPQL.

The Cytoplasmic segment spans residues 1-7 (MKFSWRT). A helical membrane pass occupies residues 8 to 28 (ALLWSLPLLVVGFFFWQGSFG). Residues 29-117 (GADANLGSNT…SHPVRNNGMV (89 aa)) are Lumenal-facing. A helical membrane pass occupies residues 118–138 (WGFVGNLIFPVLLIASLFFLF). Over 139–627 (RRSSNMPGGP…PVKEQLIPQL (489 aa)) the chain is Cytoplasmic. Residue 212 to 219 (GPPGTGKT) coordinates ATP. Zn(2+) is bound at residue histidine 433. Glutamate 434 is an active-site residue. The Zn(2+) site is built by histidine 437 and aspartate 511.

The protein in the central section; belongs to the AAA ATPase family. This sequence in the C-terminal section; belongs to the peptidase M41 family. In terms of assembly, homohexamer (Potential). Part of a large (&gt;500 kDa) complex that includes FtsH3 and PSII. Coimmunoprecipitates with YidC. Requires Zn(2+) as cofactor.

Its subcellular location is the cellular thylakoid membrane. Acts as a processive, ATP-dependent zinc metallopeptidase for both cytoplasmic and membrane proteins. Plays a role in the quality control of integral membrane proteins. In terms of biological role, plays a role in the selective replacement of photosystem II (PSII) protein D1 in the PSII repair cycle following visible-light and UV-B induced damage. If damaged D1 is not removed then new D1 cannot be inserted to restore the PSII reaction center. Seems to also degrade damaged and/or unassembled PSII proteins D2 and PsbB (CP47). May recognize D1 via its first 20 amino acids, as deletion of these prevents the PSII repair cycle. Also seems to degrade cytoplasmic GGPS, glucosylglycerol-phosphate synthase. The chain is ATP-dependent zinc metalloprotease FtsH 2 (ftsH2) from Synechocystis sp. (strain ATCC 27184 / PCC 6803 / Kazusa).